Reading from the N-terminus, the 220-residue chain is Probable glutathione S-transferase parA (220 aa).

The region spanning 4 to 83 (NNVVLLDFWP…YIDEVWHDKC (80 aa)) is the GST N-terminal domain. Glutathione is bound by residues serine 14, lysine 41, isoleucine 55, and 67-68 (ES). In terms of domain architecture, GST C-terminal spans 89-209 (DPYERSQARF…LPHPHKIYGF (121 aa)).

Belongs to the GST superfamily. HSP26 family.

The enzyme catalyses RX + glutathione = an S-substituted glutathione + a halide anion + H(+). The sequence is that of Probable glutathione S-transferase parA (PARA) from Nicotiana tabacum (Common tobacco).